The sequence spans 556 residues: Innexin-7 (556 aa).

Helical transmembrane passes span 21-41 (LVAS…AVLI), 127-147 (FFLL…KYFA), and 213-233 (AYYV…NVIL). Residue Asn-267 is glycosylated (N-linked (GlcNAc...) asparagine). The chain crosses the membrane as a helical span at residues 310–330 (IFVFLWAWYILLTAFTVGNLF). The disordered stretch occupies residues 431 to 556 (DESQVESGKN…IPKTAEKKHW (126 aa)). Residues 435–447 (VESGKNTAPSTSH) show a composition bias toward polar residues. The span at 452–461 (RGTEQLEKNV) shows a compositional bias: basic and acidic residues. Residues 463–474 (SRQGSLSTQLRP) are compositionally biased toward polar residues. Residues 500-513 (KGSKKPSPTKKKAS) show a composition bias toward basic residues. The span at 514–527 (SKNSPQSSSNSRRP) shows a compositional bias: low complexity. The segment covering 539 to 556 (HHHEPDSKIPKTAEKKHW) has biased composition (basic and acidic residues).

The protein belongs to the pannexin family.

Its subcellular location is the cell membrane. The protein localises to the cell junction. It localises to the gap junction. Its function is as follows. Structural component of the gap junctions. This chain is Innexin-7 (inx-7), found in Caenorhabditis elegans.